A 287-amino-acid chain; its full sequence is ATP synthase gamma chain (287 aa).

The protein belongs to the ATPase gamma chain family. As to quaternary structure, F-type ATPases have 2 components, CF(1) - the catalytic core - and CF(0) - the membrane proton channel. CF(1) has five subunits: alpha(3), beta(3), gamma(1), delta(1), epsilon(1). CF(0) has three main subunits: a, b and c.

The protein resides in the cell inner membrane. Its function is as follows. Produces ATP from ADP in the presence of a proton gradient across the membrane. The gamma chain is believed to be important in regulating ATPase activity and the flow of protons through the CF(0) complex. In Shigella boydii serotype 4 (strain Sb227), this protein is ATP synthase gamma chain.